The chain runs to 256 residues: Isoprenyl transferase (256 aa).

Asp33 is an active-site residue. Asp33 lines the Mg(2+) pocket. Residues 34-37 (GNGR), Trp38, Arg46, His50, and 78-80 (STE) each bind substrate. Asn81 (proton acceptor) is an active-site residue. Substrate-binding positions include Trp82, Arg84, Arg201, and 207 to 209 (RIS). Residue Glu220 participates in Mg(2+) binding.

The protein belongs to the UPP synthase family. In terms of assembly, homodimer. Mg(2+) is required as a cofactor.

Functionally, catalyzes the condensation of isopentenyl diphosphate (IPP) with allylic pyrophosphates generating different type of terpenoids. In Staphylococcus epidermidis (strain ATCC 35984 / DSM 28319 / BCRC 17069 / CCUG 31568 / BM 3577 / RP62A), this protein is Isoprenyl transferase.